A 765-amino-acid polypeptide reads, in one-letter code: Protein O-mannosyl-transferase 2 (765 aa).

The segment at 1 to 31 (MAASVVKTPKCPRRGSVKDVAQNAPRTAPTS) is disordered. A helical transmembrane segment spans residues 35 to 55 (ANWNWWLLLATVFLVTFATRF). N-linked (GlcNAc...) asparagine glycans are attached at residues asparagine 80, asparagine 106, and asparagine 119. The next 5 membrane-spanning stretches (helical) occupy residues 128 to 148 (YFCTTLGALIMPMGFDTVYDL), 175 to 195 (ILLDPILLFFMMASVWGMVKV), 206 to 226 (GLRWWLWLFLTGTMLSCTISV), 228 to 248 (FVGLFVVLLVGLHTATELWLI), and 268 to 288 (ITLIVWPVLLYILFFYIHLSV). 2 N-linked (GlcNAc...) asparagine glycosylation sites follow: asparagine 290 and asparagine 314. MIR domains lie at 318–374 (PRDV…IRPH), 384–440 (VQIL…VLIV), and 445–501 (NETV…VEDN). The N-linked (GlcNAc...) asparagine glycan is linked to asparagine 445. Helical transmembrane passes span 566–586 (IYLLGNPLIWWSNLVFLALFV), 667–687 (LFLGWMLHYLPFWAMGRVLYF), 689–709 (HYFPALIFNSLLTGVMYNYIL), and 719–739 (VILGLVLSILVYSFAAFSPLA). Asparagine 751 carries N-linked (GlcNAc...) asparagine glycosylation.

Belongs to the glycosyltransferase 39 family. As to quaternary structure, interacts with Rt/POMT1. As to expression, at the cellular blastoderm stage, expression accumulates in the ventrally located mesoderm primordium. At germ band extension, mesoderm expression is seen as stripes of strong expression. A very strong signal is also detected in the invaginating gut. As the germ band retracts, mesodermal expression decays and becomes restricted to somatic muscle precursors.

The protein resides in the endoplasmic reticulum membrane. It carries out the reaction a di-trans,poly-cis-dolichyl beta-D-mannosyl phosphate + L-seryl-[protein] = 3-O-(alpha-D-mannosyl)-L-seryl-[protein] + a di-trans,poly-cis-dolichyl phosphate + H(+). It catalyses the reaction a di-trans,poly-cis-dolichyl beta-D-mannosyl phosphate + L-threonyl-[protein] = 3-O-(alpha-D-mannosyl)-L-threonyl-[protein] + a di-trans,poly-cis-dolichyl phosphate + H(+). The protein operates within protein modification; protein glycosylation. Its function is as follows. Rt/POMT1 and tw/POMT2 function as a protein O-mannosyltransferase in association with each other to generate and maintain normal muscle development. In Drosophila melanogaster (Fruit fly), this protein is Protein O-mannosyl-transferase 2 (tw).